Here is a 1757-residue protein sequence, read N- to C-terminus: MATDSGEPASTEDSEKPDGVSFENRAARAVAPLTVEARIKEKYSTFSASGENIERKRFFRKSVEMTEDDKVAESSRRDERKAATNISRVDKVPTNVLRGGQEVKYEQCSKATSESSKDCFKEKTEKEMEEEAEMKAVATSPSGRFLKFDIELGRGAFKTVYKGLDTETWVEVAWCELQDRKLTKAEQQRFKEEAEMLKGLQHPNIVRFYDSWESTLKGKKCIVLVTELMTSGTLKTYLKRFKVMKPKVLRSWCRQILKGLQFLHTRTPPIIHRDLKCDNIFITGPTGSVKIGDLGLATLMRTSFAKSVIGTPEFMAPEMYEEHYDESVDVYAFGMCMLEMATSEYPYSECQNAAQIYRKVTSGIKPASFNKVTDPEVKEIIEGCIRQNKSERLSIKDLLNHAFFAEDTGLRVELAEEDDCSNSSLALRLWVEDPKKLKGKHKDNEAIEFSFNLEADTPEEVAYEMVKSGFFHESDSKAVAKSIRDRVTLIKKIREKKPAGCLEERRDSQCKYVRNVLPQQQTATLQPTPGPHTAAEYEETEVDQHVRQQFLQGKPQQQSSSVRGDTSSEPTAGPVLHSDTSSHPTVAYSSNQTTSSQEQPKLTQSPVLPVVQGQSSVMPIYAAGVGVVSQSQISPLTIQKVSQIKPVSQPIGAEQQATLQNPDFVRSLNQDVTSVKENTNNPDTPSGNGKQDRNKQRRASCPRPEKGTKFQLTVLQVSVSGDNMVECQLETHNNKMVTFKFDVDGDAPEDIADYMVEDNFVLENEKEKFVEELRAIVGQAQEILHVHSAVEKSIGVDSVALESNSNQTGSSEQVLINSASTQTSNESAPQSSPVGRWRFCINQTIKNREAQSPPSLQPSMAMVPGLHPFPSSRNTSNQAISQNTVFTIENNPGHRELFTSKLDHKDVVDGKIGEHASIETEQSSISYQVEDDRQIMTPATDNSNYSAALVCPVPGECEALTSQAGMFMPTYPNQQAAVLADVHIAYPGESVPIGGNAALTSVLVSSDQKPQSLSVQQPTIDAEFISKEGETTVNTETSSPKAVIATQTPGFEPAVILPATILESDGERPPKMEFADNRIKTLDEKLRNLLYQEHSISSICPESQKDTQSIDSPFSSSAEDILSYSMPEVIAISHCGIQDSPAQSPNFQQTGSKILSNVAASQPAHISVFKKDLNVITSVPSELCLHEMSPDASLPGDPEAYPAAVSSDGTIHLQTGGGYFGLSFTCPSLKNPISRKSWTRKLKSWAYRLRQSTSFFKRSKVRQVETEDKRSAIASDPIPLTREFSSDTRALSRCKAMSGSFQRGRFQVITVPQQQPVKMMSFGKDHRPPFNKTTVQSSEQALTFAEAAVSQLIEVEPAMPTHKASVSSRKLRTLYETFKEDKGDPEQGDIVSYSTACETSVSSVATEKNVTSTTEVSVQSGSEPLDKEKNESTPGKQTCTNEFSATLAGNRKSVTKTRPEGDQYLPLREEQAYAQTQNSLFYSPSSPMSSDNESEIEDEDLKVELQRLREKHIQEVVSLQTQQNKELQELYERLRATKDNKAQSSEVPLSPASPRRPRSFKSKLRSRPQSMTHSDNLVVKDALGVESNTVSCQQSPASKKGMFTDDLHKLVDDWTRETVGHFPSKPSLNQLKQSQQKSEAENWNKSCESTPSTMGYTSNWISSLSQIRGAAPTSLPQGLPLPSFHGPLASYGMPHVCQYNAVGAAGYPVQWVGISGPAQQSVVLPTQSGGLFQPGMNLQSFPAPPVQNPASIPPGPK.

The tract at residues M1–R25 is disordered. S62 carries the phosphoserine modification. Basic and acidic residues predominate over residues T66–A82. The tract at residues T66–N85 is disordered. In terms of domain architecture, Protein kinase spans L146–F404. Residues T226 to M229 and K276 contribute to the ATP site. Catalysis depends on D293, which acts as the Proton acceptor. S303 and S307 each carry phosphoserine; by autocatalysis. The segment at E536 to V546 is interaction with KLHL3. Phosphothreonine is present on T540. Polar residues-rich tracts occupy residues L551–P570, S578–Q604, and S674–G689. 2 disordered regions span residues L551–Q604 and S674–E705. S1039 carries the post-translational modification Phosphoserine. The segment covering V1404–S1422 has biased composition (polar residues). Disordered regions lie at residues V1404–T1440, S1479–D1498, and A1536–S1574. Residues S1479–D1491 are compositionally biased toward low complexity. S1550 and S1553 each carry phosphoserine. The segment covering R1555–S1566 has biased composition (basic residues). Position 1595 is a phosphoserine (S1595). Disordered regions lie at residues H1621–T1650 and P1734–K1757. Residues S1624–K1637 show a composition bias toward low complexity. The segment covering E1641–T1650 has biased composition (polar residues). The segment covering P1742–K1757 has biased composition (pro residues).

Belongs to the protein kinase superfamily. Ser/Thr protein kinase family. WNK subfamily. In terms of assembly, interacts with WNK1 and WNK4. Mg(2+) serves as cofactor. Autophosphorylated at Ser-303 and Ser-307, promoting its activity. Phosphorylation at Thr-540 prevents interaction with KLHL3 and subsequent ubiquitination and degradation by the BCR(KLHL3) complex. In terms of processing, ubiquitinated by the BCR(KLHL2) complex, leading to its degradation. Ubiquitinated by the BCR(KLHL3) complex, leading to its degradation. Expressed in pancreatic duct.

Its subcellular location is the cytoplasm. It carries out the reaction L-seryl-[protein] + ATP = O-phospho-L-seryl-[protein] + ADP + H(+). The catalysed reaction is L-threonyl-[protein] + ATP = O-phospho-L-threonyl-[protein] + ADP + H(+). Activated in response to hyperosmotic stress: cell shrinkage promotes formation of a membraneless compartment that concentrates WNK3 with its substrates, OXSR1/OSR1 and STK39/SPAK. Activation requires autophosphorylation of Ser-307 and, to a lower extent, Ser-303. Autophosphorylation and subsequent activation is inhibited by increases in intracellular ionic strength: Cl(-) potently inhibits WNK3 kinase activity via direct binding. Also inhibited by K(+) ions. Kinase activity is inhibited by WNK4. In terms of biological role, serine/threonine-protein kinase component of the WNK3-SPAK/OSR1 kinase cascade, which plays an important role in the regulation of electrolyte homeostasis and regulatory volume increase in response to hyperosmotic stress. WNK3 mediates regulatory volume increase in response to hyperosmotic stress by acting as a molecular crowding sensor, which senses cell shrinkage and mediates formation of a membraneless compartment by undergoing liquid-liquid phase separation. The membraneless compartment concentrates WNK3 with its substrates, OXSR1/OSR1 and STK39/SPAK, promoting WNK3-dependent phosphorylation and activation of downstream kinases OXSR1/OSR1 and STK39/SPAK. Following activation, OXSR1/OSR1 and STK39/SPAK catalyze phosphorylation of ion cotransporters SLC12A1/NKCC2, SLC12A2/NKCC1, SLC12A3/NCC, SLC12A4/KCC1, SLC12A5/KCC2 or SLC12A6/KCC3, regulating their activity. Phosphorylation of Na-K-Cl cotransporters SLC12A2/NKCC1 and SLC12A2/NKCC1 promote their activation and ion influx; simultaneously, phosphorylation of K-Cl cotransporters SLC12A4/KCC1, SLC12A5/KCC2 and SLC12A6/KCC3 inhibits its activity, blocking ion efflux. Phosphorylates WNK4, possibly regulating the activity of SLC12A3/NCC. May also phosphorylate NEDD4L. Also acts as a scaffold protein independently of its protein kinase activity: negatively regulates cell membrane localization of various transporters and channels, such as KCNJ1 and SLC26A9. Increases Ca(2+) influx mediated by TRPV5 and TRPV6 by enhancing their membrane expression level via a kinase-dependent pathway. This chain is Serine/threonine-protein kinase WNK3, found in Mus musculus (Mouse).